The chain runs to 233 residues: 28 kDa ribonucleoprotein, chloroplastic (233 aa).

Positions 1-16 are enriched in polar residues; it reads CVAQTSEWEQEGSTNA. Residues 1-52 form a disordered region; it reads CVAQTSEWEQEGSTNAVLEGESDPEGAVSWGSETQVSDEGGVEGGQGFSEPP. 2 consecutive RRM domains span residues 55-133 and 149-227; these read AKLF…KAAP and CRVY…VAEE.

The protein localises to the plastid. Its subcellular location is the chloroplast. Its function is as follows. Probably involved in the 3'-end processing of chloroplast mRNA's. In Spinacia oleracea (Spinach), this protein is 28 kDa ribonucleoprotein, chloroplastic.